Consider the following 91-residue polypeptide: UPF0213 protein NGO_1598 (91 aa).

The GIY-YIG domain occupies 4–83 (SNWSVYLILC…AAQKRQLWEQ (80 aa)).

The protein belongs to the UPF0213 family.

The polypeptide is UPF0213 protein NGO_1598 (Neisseria gonorrhoeae (strain ATCC 700825 / FA 1090)).